The primary structure comprises 219 residues: Uracil-DNA glycosylase (219 aa).

Asp-62 functions as the Proton acceptor in the catalytic mechanism.

It belongs to the uracil-DNA glycosylase (UDG) superfamily. UNG family.

The protein resides in the cytoplasm. It catalyses the reaction Hydrolyzes single-stranded DNA or mismatched double-stranded DNA and polynucleotides, releasing free uracil.. Its function is as follows. Excises uracil residues from the DNA which can arise as a result of misincorporation of dUMP residues by DNA polymerase or due to deamination of cytosine. This chain is Uracil-DNA glycosylase, found in Lactococcus lactis subsp. cremoris (strain MG1363).